We begin with the raw amino-acid sequence, 370 residues long: Sphingolipid delta(4)-desaturase (370 aa).

The next 3 membrane-spanning stretches (helical) occupy residues 68-88, 92-112, and 128-148; these read VMGVVLLQLGIAYYLRHTPVF, FLTLAYVIGATANQAIFLAIH, and LFAVFANIPIGVPYSASFQPY. The short motif at 112–116 is the Histidine box-1 element; the sequence is HELSH. Positions 149-153 match the Histidine box-2 motif; the sequence is HQLHH. Helical transmembrane passes span 173–193, 197–217, and 220–240; these read FLSSMPGKLFFAIFQIFFYAL, FITQIKFTYVHLVNVVFQLIF, and VMVTCWGWKALGYFIVSTFLA. A Histidine box-3 motif is present at residues 299–303; it reads HNEHH.

It belongs to the fatty acid desaturase type 1 family. DEGS subfamily.

The protein resides in the membrane. It catalyses the reaction an N-acylsphinganine + 2 Fe(II)-[cytochrome b5] + O2 + 2 H(+) = an N-acylsphing-4-enine + 2 Fe(III)-[cytochrome b5] + 2 H2O. It functions in the pathway lipid metabolism; sphingolipid metabolism. Delta(4)-fatty-acid desaturase which introduces a double bond at the 4-position in the long-chain base (LCB) of ceramides. Required for the formation of the monounsaturated sphingoid base (E)-sphing-4-enine during glucosylceramide (GluCer) biosynthesis. This chain is Sphingolipid delta(4)-desaturase, found in Candida albicans (strain SC5314 / ATCC MYA-2876) (Yeast).